The chain runs to 92 residues: MVKSELVQIIARHNPHLFQRDVENIVNAIFEEISTALANGDRVELRGFGAFSVKSRSARNGRNPRTGEAVAVDEKWIPFFKTGKDLRDRLNQ.

The protein belongs to the bacterial histone-like protein family. Heterodimer of an alpha and a beta chain.

In terms of biological role, this protein is one of the two subunits of integration host factor, a specific DNA-binding protein that functions in genetic recombination as well as in transcriptional and translational control. This chain is Integration host factor subunit beta, found in Bartonella tribocorum (strain CIP 105476 / IBS 506).